Reading from the N-terminus, the 247-residue chain is Trypsin (247 aa).

Positions 1–21 are cleaved as a signal peptide; sequence LTTVISYFALVAFALVGVSYA. A propeptide spans 22 to 30 (activation peptide); the sequence is TPKASINGR. A Peptidase S1 domain is found at 31-247; that stretch reads IVGGEMTDIS…QSNFPGVYGI (217 aa). Cysteine 61 and cysteine 77 are disulfide-bonded. Catalysis depends on charge relay system residues histidine 76 and aspartate 120. Intrachain disulfides connect cysteine 185–cysteine 201 and cysteine 212–cysteine 236. Catalysis depends on serine 216, which acts as the Charge relay system.

It belongs to the peptidase S1 family. Midgut.

The protein localises to the secreted. The protein resides in the extracellular space. It catalyses the reaction Preferential cleavage: Arg-|-Xaa, Lys-|-Xaa.. The chain is Trypsin from Simulium vittatum (Striped black fly).